A 320-amino-acid polypeptide reads, in one-letter code: Ferrochelatase (320 aa).

Fe cation is bound by residues histidine 194 and glutamate 275.

Belongs to the ferrochelatase family. In terms of assembly, monomer.

The protein localises to the cytoplasm. It carries out the reaction heme b + 2 H(+) = protoporphyrin IX + Fe(2+). Its pathway is porphyrin-containing compound metabolism; protoheme biosynthesis; protoheme from protoporphyrin-IX: step 1/1. Catalyzes the ferrous insertion into protoporphyrin IX. The chain is Ferrochelatase from Shigella flexneri serotype 5b (strain 8401).